The chain runs to 301 residues: uncharacterized protein (301 aa).

A compositionally biased stretch (basic and acidic residues) spans 16-28; that stretch reads EITEESEKTKTDL. The tract at residues 16-38 is disordered; that stretch reads EITEESEKTKTDLQKANTPNKTE. Polar residues predominate over residues 29–38; sequence QKANTPNKTE. In terms of domain architecture, G-patch spans 252–301; that stretch reads KENVALKMLQRCGWKEGQGLGQHNQGIINPLHVEISGFVTETKHSKINDK.

This is an uncharacterized protein from Schizosaccharomyces pombe (strain 972 / ATCC 24843) (Fission yeast).